Here is a 165-residue protein sequence, read N- to C-terminus: MEELVGLLRIRVKRGINLAQRDTLSSDPFVVITMGSQKLKTRVVENNCNPEWNEELTLALRHPDEPVNLIVYDKDTFTSHDKMGDAKIDIKPFLEVHKMGLQELPDGTEIKRVVPNRENCLAEASSIVSNNGKIVQNMILLLRNVECGEVEIQLEWIDIPGSRGL.

At methionine 1 the chain carries N-acetylmethionine. A C2 domain is found at 1–106; it reads MEELVGLLRI…HKMGLQELPD (106 aa). Residues arginine 21, aspartate 22, aspartate 27, aspartate 73, lysine 74, aspartate 75, and aspartate 81 each contribute to the Ca(2+) site.

The protein belongs to the plant CAR protein family. As to quaternary structure, binds to PYR/PYL/RCAR abscisic acid intracellular receptors in an ABA-independent manner, both at the plasma membrane and in the nucleus.

Its subcellular location is the cell membrane. The protein resides in the nucleus. Its function is as follows. Stimulates the GTPase/ATPase activities of Obg-like ATPases. Mediates the transient calcium-dependent interaction of PYR/PYL/RCAR abscisic acid (ABA) receptors with the plasma membrane and thus regulates ABA sensitivity. This chain is Protein C2-DOMAIN ABA-RELATED 7, found in Arabidopsis thaliana (Mouse-ear cress).